We begin with the raw amino-acid sequence, 458 residues long: Probable mitochondrial chaperone BCS1-B (458 aa).

Over 1–26 (MENVITNNNKGLPKSILKFIPEPIQP) the chain is Mitochondrial intermembrane. A helical membrane pass occupies residues 27-47 (LFENPFFSAGFGLIGVGSILA). Over 48-458 (MGRKGFQQAM…INNLNELIKK (411 aa)) the chain is Mitochondrial matrix. 248 to 255 (GPPGTGKS) contacts ATP.

Belongs to the AAA ATPase family. BCS1 subfamily.

It localises to the mitochondrion inner membrane. The catalysed reaction is ATP + H2O = ADP + phosphate + H(+). Functionally, chaperone necessary for the assembly of mitochondrial respiratory chain complex III. The polypeptide is Probable mitochondrial chaperone BCS1-B (bcsl1b) (Dictyostelium discoideum (Social amoeba)).